Here is a 114-residue protein sequence, read N- to C-terminus: Large ribosomal subunit protein bL19 (114 aa).

Belongs to the bacterial ribosomal protein bL19 family.

Functionally, this protein is located at the 30S-50S ribosomal subunit interface and may play a role in the structure and function of the aminoacyl-tRNA binding site. The protein is Large ribosomal subunit protein bL19 of Lactococcus lactis subsp. lactis (strain IL1403) (Streptococcus lactis).